Consider the following 388-residue polypeptide: Succinate--CoA ligase [ADP-forming] subunit beta (388 aa).

An ATP-grasp domain is found at 9-244 (KSLFAEYGLP…PSQDDAREAH (236 aa)). ATP-binding positions include Lys-46, 53 to 55 (GRG), Glu-99, Thr-102, and Glu-107. 2 residues coordinate Mg(2+): Asn-199 and Asp-213. Substrate-binding positions include Asn-264 and 321–323 (GIV).

The protein belongs to the succinate/malate CoA ligase beta subunit family. Heterotetramer of two alpha and two beta subunits. It depends on Mg(2+) as a cofactor.

The catalysed reaction is succinate + ATP + CoA = succinyl-CoA + ADP + phosphate. It carries out the reaction GTP + succinate + CoA = succinyl-CoA + GDP + phosphate. It functions in the pathway carbohydrate metabolism; tricarboxylic acid cycle; succinate from succinyl-CoA (ligase route): step 1/1. Functionally, succinyl-CoA synthetase functions in the citric acid cycle (TCA), coupling the hydrolysis of succinyl-CoA to the synthesis of either ATP or GTP and thus represents the only step of substrate-level phosphorylation in the TCA. The beta subunit provides nucleotide specificity of the enzyme and binds the substrate succinate, while the binding sites for coenzyme A and phosphate are found in the alpha subunit. The chain is Succinate--CoA ligase [ADP-forming] subunit beta from Shewanella sp. (strain MR-4).